The chain runs to 807 residues: Leucine--tRNA ligase (807 aa).

Residues 38-49 (PYPSGSGLHVGH) carry the 'HIGH' region motif. Positions 579 to 583 (KMSKS) match the 'KMSKS' region motif. K582 contributes to the ATP binding site.

Belongs to the class-I aminoacyl-tRNA synthetase family.

The protein localises to the cytoplasm. It catalyses the reaction tRNA(Leu) + L-leucine + ATP = L-leucyl-tRNA(Leu) + AMP + diphosphate. The sequence is that of Leucine--tRNA ligase from Mycoplasmopsis pulmonis (strain UAB CTIP) (Mycoplasma pulmonis).